A 346-amino-acid chain; its full sequence is MQQEKELVKQKAKELLLDLLSIYTPSKNETNATKFFEKISNEFNLKLEILPDSNSFILGEGEILLASHVDTVPGYIEPKIENEVIYGRGAVDAKGPLISMIIAAWLLNEKGIKVMVSGLADEESTSIGAKELTLKNFNFKHIIVGEPSNGTDIVVEYRGSIQLDIMCKSTPEHSSSAKSNLIVDISKKIIEVYKQPENYDKPSIVPTIIRAGESYNVTPAKLYLHFDVRYAINNKRDDLINEIKDKFQECGLKIVDETPPVKVSINNPVVKSLTRALLKQNIKPRLVRKAGTSDMNILQKITTSIATYGPGNSMLEHTNQEKITLDEIYIGVKTYMLAIEELWQKS.

A Zn(2+)-binding site is contributed by His68. Asp70 is a catalytic residue. A Zn(2+)-binding site is contributed by Asp92. The active-site Proton acceptor is the Glu122. 3 residues coordinate Zn(2+): Glu123, Glu146, and His317.

It belongs to the peptidase M20A family. LysK subfamily. It depends on Zn(2+) as a cofactor. Co(2+) serves as cofactor.

The protein localises to the cytoplasm. The enzyme catalyses [amino-group carrier protein]-C-terminal-gamma-(L-lysyl)-L-glutamate + H2O = [amino-group carrier protein]-C-terminal-L-glutamate + L-lysine. The catalysed reaction is [amino-group carrier protein]-C-terminal-gamma-(L-ornithyl)-L-glutamate + H2O = [amino-group carrier protein]-C-terminal-L-glutamate + L-ornithine. Its pathway is amino-acid biosynthesis; L-lysine biosynthesis via AAA pathway; L-lysine from L-alpha-aminoadipate (Thermus route): step 5/5. It participates in amino-acid biosynthesis; L-arginine biosynthesis. Its function is as follows. Catalyzes the release of L-lysine from [LysW]-gamma-L-lysine and the release of L-ornithine from [LysW]-L-ornithine. In Saccharolobus islandicus (strain M.16.4 / Kamchatka #3) (Sulfolobus islandicus), this protein is [LysW]-lysine/[LysW]-ornithine hydrolase.